A 156-amino-acid chain; its full sequence is Myosin, essential light chain, adductor muscle (156 aa).

2 EF-hand domains span residues 6–43 and 81–116; these read DEID…LGIN and GTFA…LGER.

In terms of biological role, in molluscan muscle, calcium regulation is associated with myosin rather than with actin. Muscle myosin contains two types of light chains: the catalytic light chain, essential for ATPase activity, and the regulatory light chain, a calcium-binding protein responsible for Ca(2+) dependent binding and Ca(2+) dependent Mg-ATPase activity. The chain is Myosin, essential light chain, adductor muscle from Mizuhopecten yessoensis (Japanese scallop).